The sequence spans 412 residues: MQVKNRLTPFFENITFDREDNEMILNFGPQHPSAHGQLRLMLHLQQEMIVKAHPDIGYLHRGMEKMAENMIYNEFMPTTDRMDYIASSANNYGFALAVERLIGLEVPRRAKVIRMMLLEINRLMSHLFWLATTALDIGAMTVFLFAFREREYLMDIMEGYCGARLTHAAIRIGGVPLDIQDTFITQLKTFLDKLPQNIKDYEDLLDTNRIWLMRMEEVGVISKEMALSWGCSGPMLRASGVAWDIRKEEPYELYDEVEFRVPYSDKGDNFARYRIYMEEMRESAKILYQTIDMYEKCVKDNQTELMAHAPKYISAPKLDIMTQNYSLMQHFVLVTQGMRPPVGEVYVATESPKGELGFYINSQGGPYPYRLKLRAPSFWHTGILTDILPGHYIPDVVSIIGTTNIVFGEVDR.

This sequence belongs to the complex I 49 kDa subunit family. In terms of assembly, NDH-1 is composed of 14 different subunits. Subunits NuoB, C, D, E, F, and G constitute the peripheral sector of the complex.

The protein localises to the cell inner membrane. The catalysed reaction is a quinone + NADH + 5 H(+)(in) = a quinol + NAD(+) + 4 H(+)(out). Functionally, NDH-1 shuttles electrons from NADH, via FMN and iron-sulfur (Fe-S) centers, to quinones in the respiratory chain. The immediate electron acceptor for the enzyme in this species is believed to be ubiquinone. Couples the redox reaction to proton translocation (for every two electrons transferred, four hydrogen ions are translocated across the cytoplasmic membrane), and thus conserves the redox energy in a proton gradient. The polypeptide is NADH-quinone oxidoreductase subunit D (Sulfurimonas denitrificans (strain ATCC 33889 / DSM 1251) (Thiomicrospira denitrificans (strain ATCC 33889 / DSM 1251))).